The sequence spans 829 residues: Genome polyprotein (829 aa).

Serine 2 is modified (N-acetylserine; by host). The interval 2–23 (STNPKPQRKTKRNTNRRPQDVK) is interaction with STAT1. The segment at 2 to 58 (STNPKPQRKTKRNTNRRPQDVKFPGGGQIVGGVYLLPRRGPRLGVRATRKTSERSQP) is interaction with EIF2AK2/PKR. The segment at 2-59 (STNPKPQRKTKRNTNRRPQDVKFPGGGQIVGGVYLLPRRGPRLGVRATRKTSERSQPR) is interaction with DDX3X. Residues 2–75 (STNPKPQRKT…PKARRPKGRN (74 aa)) form a disordered region. The Cytoplasmic portion of the chain corresponds to 2-168 (STNPKPQRKT…EDGVNYATGN (167 aa)). 2 consecutive short sequence motifs (nuclear localization signal) follow at residues 5 to 13 (PKPQRKTKR) and 38 to 43 (PRRGPR). Basic residues predominate over residues 7-16 (PQRKTKRNTN). Low complexity predominate over residues 32–47 (GGVYLLPRRGPRLGVR). Serine 53 is subject to Phosphoserine; by host. Short sequence motifs (nuclear localization signal) lie at residues 58-64 (PRGRRQP) and 66-71 (PKARRP). Positions 58 to 73 (PRGRRQPIPKARRPKG) are enriched in basic residues. Serine 99 carries the post-translational modification Phosphoserine; by host. The important for endoplasmic reticulum and mitochondrial localization stretch occupies residues 112–152 (PRRRSRNLGKVIDTLTCGFVDLMGYIPLVGAPLRGAARALA). Residue serine 116 is modified to Phosphoserine; by host PKA. Residues 122–173 (VIDTLTCGFVDLMGYIPLVGAPLRGAARALAHGVRVLEDGVNYATGNLPGCS) form an interaction with APOA2 region. The tract at residues 164–167 (YATG) is important for lipid droplets localization. A helical membrane pass occupies residues 169–189 (LPGCSFSIFLLALLSCLTVPA). A propeptide spans 178–191 (LLALLSCLTVPASA) (ER anchor for the core protein, removed in mature form by host signal peptidase). At 190-358 (SAYQVRNSTG…AGAHWGVLAG (169 aa)) the chain is on the lumenal side. 3 N-linked (GlcNAc...) asparagine; by host glycosylation sites follow: asparagine 196, asparagine 209, and asparagine 234. The important for fusion stretch occupies residues 265 to 296 (LVGSATLCSALYVGDLCGSVFLVGQLFTFSPR). Residue asparagine 305 is glycosylated (N-linked (GlcNAc...) asparagine; by host). A helical membrane pass occupies residues 359–379 (MAYFSMVGNWAKVLAVLLLFA). The Lumenal portion of the chain corresponds to 380–725 (GVDAETHVTG…WEYVVLLFLL (346 aa)). Residues 385–411 (THVTGGAAARSTLQLAGLFQPGAKQNV) form an HVR1 region. Asparagine 417, asparagine 423, asparagine 430, and asparagine 448 each carry an N-linked (GlcNAc...) (high mannose) asparagine; by host glycan. Intrachain disulfides connect cysteine 429-cysteine 552, cysteine 452-cysteine 459, cysteine 486-cysteine 494, and cysteine 503-cysteine 508. The tract at residues 474-479 (YAGGGG) is HVR2. A CD81-binding 1 region spans residues 480–493 (PDHRPYCWHYPPKP). Asparagine 540 carries N-linked (GlcNAc...) asparagine; by host glycosylation. The interval 544–551 (PPLGNWFG) is CD81-binding 2. Asparagine 556 carries N-linked (GlcNAc...) (high mannose) asparagine; by host glycosylation. Cysteine 564 and cysteine 569 are oxidised to a cystine. Asparagine 576 carries N-linked (GlcNAc...) (high mannose) asparagine; by host glycosylation. Intrachain disulfides connect cysteine 581/cysteine 585, cysteine 597/cysteine 620, and cysteine 607/cysteine 644. N-linked (GlcNAc...) (high mannose) asparagine; by host glycosylation is found at asparagine 623 and asparagine 645. Cysteine 652 and cysteine 677 are joined by a disulfide. A PKR/eIF2-alpha phosphorylation homology domain (PePHD) region spans residues 660 to 671 (SELSPLLLSTTQ). A helical membrane pass occupies residues 726-746 (LADARVCSCLWMMLLISQAEA). Residues 747 to 757 (ALENLVVLNAA) are Lumenal-facing. Residues 758 to 778 (SLAGTHGLVSFLVFFCFAWFL) form a helical membrane-spanning segment. Residues 779–781 (RGK) lie on the Cytoplasmic side of the membrane. Residues 782–803 (WVPGAVYALYGMWPLLLLLLAL) form a helical membrane-spanning segment. Over 804–813 (PQRAYALDTE) the chain is Lumenal. Residues 814 to 829 (VAASCGGVVLVGLMAL) form a helical membrane-spanning segment.

It belongs to the hepacivirus polyprotein family. As to quaternary structure, homooligomer. Interacts with E1 (via C-terminus). Interacts with the non-structural protein 5A. Interacts (via N-terminus) with host STAT1 (via SH2 domain); this interaction results in decreased STAT1 phosphorylation and ubiquitin-mediated proteasome-dependent STAT1 degradation, leading to decreased IFN-stimulated gene transcription. Interacts with host STAT3; this interaction constitutively activates STAT3. Interacts with host LTBR receptor. Interacts with host TNFRSF1A receptor and possibly induces apoptosis. Interacts with host HNRPK. Interacts with host YWHAE. Interacts with host UBE3A/E6AP. Interacts with host DDX3X. Interacts with host APOA2. Interacts with host RXRA protein. Interacts with host SP110 isoform 3/Sp110b; this interaction sequesters the transcriptional corepressor SP110 away from the nucleus. Interacts with host CREB3 nuclear transcription protein; this interaction triggers cell transformation. Interacts with host ACY3. Interacts with host C1QR1. Interacts with host RBM24; this interaction, which enhances the interaction of the mature core protein with 5'-UTR, may inhibit viral translation and favor replication. Interacts with host EIF2AK2/PKR; this interaction induces the autophosphorylation of EIF2AK2. Part of the viral assembly initiation complex composed of NS2, E1, E2, NS3, NS4A, NS5A and the mature core protein. In terms of assembly, forms a heterodimer with envelope glycoprotein E2. Interacts with mature core protein. Interacts with protease NS2. The heterodimer E1/E2 interacts with host CLDN1; this interaction plays a role in viral entry into host cell. Interacts with host SPSB2 (via C-terminus). Part of the viral assembly initiation complex composed of NS2, E1, E2, NS3, NS4A, NS5A and the mature core protein. Forms a heterodimer with envelope glycoprotein E1. Interacts with host CD81 and SCARB1 receptors; these interactions play a role in viral entry into host cell. Interacts with host EIF2AK2/PKR; this interaction inhibits EIF2AK2 and probably allows the virus to evade the innate immune response. Interacts with host CD209/DC-SIGN and CLEC4M/DC-SIGNR. Interact with host SPCS1; this interaction is essential for viral particle assembly. Interacts with protease NS2. The heterodimer E1/E2 interacts with host CLDN1; this interaction plays a role in viral entry into host cell. Part of the viral assembly initiation complex composed of NS2, E1, E2, NS3, NS4A, NS5A and the mature core protein. As to quaternary structure, homohexamer. Homoheptamer. Interacts with protease NS2. In terms of assembly, homodimer. Interacts with host SPCS1; this interaction is essential for viral particle assembly. Interacts with envelope glycoprotein E1. Interacts with envelope glycoprotein E2. Interacts with viroporin p7. Interacts with serine protease/helicase NS3. Part of the replication complex composed of NS2, NS3, NS4A, NS4B, NS5A and the RNA-directed RNA polymerase embedded in an ER-derived membranous web. Part of the viral assembly initiation complex composed of NS2, E1, E2, NS3, NS4A, NS5A and the mature core protein. Zn(2+) is required as a cofactor. Specific enzymatic cleavages in vivo yield mature proteins. The structural proteins, core, E1, E2 and p7 are produced by proteolytic processing by host signal peptidases. The core protein precursor is synthesized as a 23 kDa, which is retained in the ER membrane through the hydrophobic signal peptide. Cleavage by the signal peptidase releases the 21 kDa mature core protein. The cleavage of the core protein precursor occurs between aminoacids 176 and 188 but the exact cleavage site is not known. Some degraded forms of the core protein appear as well during the course of infection. The other proteins (p7, NS2, NS3, NS4A, NS4B, NS5A and NS5B) are cleaved by the viral proteases. Autoprocessing between NS2 and NS3 is mediated by the NS2 cysteine protease catalytic domain and regulated by the NS3 N-terminal domain. In terms of processing, phosphorylated by host PKC and PKA. Post-translationally, ubiquitinated; mediated by UBE3A and leading to core protein subsequent proteasomal degradation. Highly N-glycosylated. In terms of processing, palmitoylation is required for NS2/3 autoprocessing and E2 recruitment to membranes.

It is found in the host endoplasmic reticulum membrane. The protein resides in the host mitochondrion membrane. The protein localises to the virion. Its subcellular location is the host cytoplasm. It localises to the host nucleus. It is found in the host lipid droplet. The protein resides in the virion membrane. The protein localises to the host mitochondrion. Its subcellular location is the host cell membrane. With respect to regulation, inhibited by the antiviral drug hexamethylene amiloride. Inhibition by amantadine appears to be genotype-dependent. Also inhibited by long-alkyl-chain iminosugar derivatives. In terms of biological role, packages viral RNA to form a viral nucleocapsid, and promotes virion budding. Participates in the viral particle production as a result of its interaction with the non-structural protein 5A. Binds RNA and may function as a RNA chaperone to induce the RNA structural rearrangements taking place during virus replication. Modulates viral translation initiation by interacting with viral IRES and 40S ribosomal subunit. Affects various cell signaling pathways, host immunity and lipid metabolism. Prevents the establishment of cellular antiviral state by blocking the interferon-alpha/beta (IFN-alpha/beta) and IFN-gamma signaling pathways and by blocking the formation of phosphorylated STAT1 and promoting ubiquitin-mediated proteasome-dependent degradation of STAT1. Activates STAT3 leading to cellular transformation. Regulates the activity of cellular genes, including c-myc and c-fos. May repress the promoter of p53, and sequester CREB3 and SP110 isoform 3/Sp110b in the cytoplasm. Represses cell cycle negative regulating factor CDKN1A, thereby interrupting an important check point of normal cell cycle regulation. Targets transcription factors involved in the regulation of inflammatory responses and in the immune response: suppresses TNF-induced NF-kappa-B activation, and activates AP-1. Binds to dendritic cells (DCs) via C1QR1, resulting in down-regulation of T-lymphocytes proliferation. Alters lipid metabolism by interacting with hepatocellular proteins involved in lipid accumulation and storage. Induces up-regulation of FAS promoter activity, and thereby contributes to the increased triglyceride accumulation in hepatocytes (steatosis). Its function is as follows. Forms a heterodimer with envelope glycoprotein E2, which mediates virus attachment to the host cell, virion internalization through clathrin-dependent endocytosis and fusion with host membrane. Fusion with the host cell is most likely mediated by both E1 and E2, through conformational rearrangements of the heterodimer required for fusion rather than a classical class II fusion mechanism. E1/E2 heterodimer binds host apolipoproteins such as APOB and ApoE thereby forming a lipo-viro-particle (LVP). APOE associated to the LVP allows the initial virus attachment to cell surface receptors such as the heparan sulfate proteoglycans (HSPGs), syndecan-1 (SDC1), syndecan-1 (SDC2), the low-density lipoprotein receptor (LDLR) and scavenger receptor class B type I (SCARB1). The cholesterol transfer activity of SCARB1 allows E2 exposure and binding of E2 to SCARB1 and the tetraspanin CD81. E1/E2 heterodimer binding on CD81 activates the epithelial growth factor receptor (EGFR) signaling pathway. Diffusion of the complex E1-E2-EGFR-SCARB1-CD81 to the cell lateral membrane allows further interaction with Claudin 1 (CLDN1) and occludin (OCLN) to finally trigger HCV entry. Functionally, forms a heterodimer with envelope glycoprotein E1, which mediates virus attachment to the host cell, virion internalization through clathrin-dependent endocytosis and fusion with host membrane. Fusion with the host cell is most likely mediated by both E1 and E2, through conformational rearrangements of the heterodimer required for fusion rather than a classical class II fusion mechanism. The interaction between envelope glycoprotein E2 and host apolipoprotein E/APOE allows the proper assembly, maturation and infectivity of the viral particles. This interaction is probably promoted via the up-regulation of cellular autophagy by the virus. E1/E2 heterodimer binds host apolipoproteins such as APOB and APOE thereby forming a lipo-viro-particle (LVP). APOE associated to the LVP allows the initial virus attachment to cell surface receptors such as the heparan sulfate proteoglycans (HSPGs), syndecan-1 (SDC1), syndecan-1 (SDC2), the low-density lipoprotein receptor (LDLR) and scavenger receptor class B type I (SCARB1). The cholesterol transfer activity of SCARB1 allows E2 exposure and binding of E2 to SCARB1 and the tetraspanin CD81. E1/E2 heterodimer binding on CD81 activates the epithelial growth factor receptor (EGFR) signaling pathway. Diffusion of the complex E1-E2-EGFR-SCARB1-CD81 to the cell lateral membrane allows further interaction with Claudin 1 (CLDN1) and occludin (OCLN) to finally trigger HCV entry. Inhibits host EIF2AK2/PKR activation, preventing the establishment of an antiviral state. Viral ligand for CD209/DC-SIGN and CLEC4M/DC-SIGNR, which are respectively found on dendritic cells (DCs), and on liver sinusoidal endothelial cells and macrophage-like cells of lymph node sinuses. These interactions allow the capture of circulating HCV particles by these cells and subsequent facilitated transmission to permissive cells such as hepatocytes and lymphocyte subpopulations. Ion channel protein that acts as a viroporin and plays an essential role in the assembly, envelopment and secretion of viral particles. Regulates the host cell secretory pathway, which induces the intracellular retention of viral glycoproteins and favors assembly of viral particles. Creates a pore in acidic organelles and releases Ca(2+) and H(+) in the cytoplasm of infected cells, leading to a productive viral infection. High levels of cytoplasmic Ca(2+) may trigger membrane trafficking and transport of viral ER-associated proteins to viroplasms, sites of viral genome replication. This ionic imbalance induces the assembly of the inflammasome complex, which triggers the maturation of pro-IL-1beta into IL-1beta through the action of caspase-1. Targets also host mitochondria and induces mitochondrial depolarization. In addition of its role as a viroporin, acts as a lipid raft adhesion factor. In terms of biological role, cysteine protease required for the proteolytic auto-cleavage between the non-structural proteins NS2 and NS3. The N-terminus of NS3 is required for the function of NS2 protease (active region NS2-3). Promotes the initiation of viral particle assembly by mediating the interaction between structural and non-structural proteins. The polypeptide is Genome polyprotein (Hepatitis C virus (isolate Glasgow) (HCV)).